The sequence spans 315 residues: Putative peptide transport system permease protein BMEII0209 (315 aa).

6 helical membrane passes run 13-33 (AIPV…LLPG), 102-122 (LALL…VVAA), 136-156 (LALL…VILF), 178-198 (WLRS…GYLA), 238-258 (VSVL…SVVI), and 287-307 (MLFL…LYTI). In terms of domain architecture, ABC transmembrane type-1 spans 96–305 (LPVTISLALL…AINVLVDILY (210 aa)).

The protein belongs to the binding-protein-dependent transport system permease family. As to quaternary structure, the complex is composed of two ATP-binding proteins (BMEII0205 and BMEII0206), two transmembrane proteins (BMEII0207/BMEII0208 and BMEII0209) and a solute-binding protein (BMEII0210).

It localises to the cell inner membrane. Its function is as follows. Probably part of an ABC transporter complex that could be involved in peptide import. Probably responsible for the translocation of the substrate across the membrane. This Brucella melitensis biotype 1 (strain ATCC 23456 / CCUG 17765 / NCTC 10094 / 16M) protein is Putative peptide transport system permease protein BMEII0209.